A 471-amino-acid chain; its full sequence is BPI fold-containing family B member 1 (471 aa).

The first 18 residues, 1–18, serve as a signal peptide directing secretion; that stretch reads MTNPWIVSLLLGATLVQA. 4 N-linked (GlcNAc...) asparagine glycosylation sites follow: Asn150, Asn157, Asn260, and Asn397. A disulfide bridge connects residues Cys154 and Cys197.

This sequence belongs to the BPI/LBP/Plunc superfamily. Plunc family.

It localises to the secreted. May play a role in innate immunity in mouth, nose and lungs. Binds bacterial lipopolysaccharide (LPS) and modulates the cellular responses to LPS. In Rattus norvegicus (Rat), this protein is BPI fold-containing family B member 1 (Bpifb1).